The sequence spans 989 residues: Cellulose synthase A catalytic subunit 4 [UDP-forming] (989 aa).

Over 1–184 the chain is Cytoplasmic; the sequence is MMESGVPPCA…SRIIPISKNK (184 aa). 8 residues coordinate Zn(2+): Cys9, Cys12, Cys20, Cys23, Cys28, Cys31, Cys43, and Cys46. The RING-type; degenerate zinc-finger motif lies at 9 to 47; sequence CAACGDDAHAACRACSYALCKACLDEDAAEGRTTCARCG. Basic residues predominate over residues 138–149; it reads KKEKKASAKKAA. Positions 138–158 are disordered; that stretch reads KKEKKASAKKAAAKAQAPPVE. A helical membrane pass occupies residues 185–205; that stretch reads LTPYRAVIIMRLVVLGLFFHY. Residues 206 to 213 lie on the Extracellular side of the membrane; the sequence is RITNPVYS. The helical transmembrane segment at 214–234 threads the bilayer; sequence AFGLWMTSVICEIWFGFSWIL. Over 235–772 the chain is Cytoplasmic; the sequence is DQFPKWCPIN…INTIVYPFTS (538 aa). Residues Ser272, Lys278, Glu279, and Asp308 each contribute to the UDP-alpha-D-glucose site. Asp308 is an active-site residue. A coiled-coil region spans residues 362–389; that stretch reads VKERRAMKRDYEEYKVRINALVAKAQKT. A UDP-alpha-D-glucose-binding site is contributed by Lys449. Positions 450 and 474 each coordinate Mn(2+). The active site involves Asp688. A helical transmembrane segment spans residues 773–793; that stretch reads LPLIAYCCLPAICLLTGKFII. Residues 794–798 lie on the Extracellular side of the membrane; sequence PTLSN. The chain crosses the membrane as a helical span at residues 799 to 819; it reads AATIWFLGLFISIIVTSVLEL. Residues 820–835 are Cytoplasmic-facing; that stretch reads RWSGIGIEDWWRNEQF. The chain crosses the membrane as a helical span at residues 836 to 856; sequence WVIGGVSAHLFAVFQGILKMI. The Extracellular portion of the chain corresponds to 857–884; it reads AGLDTNFTVTAKATDDTEFGELYVFKWT. Asn862 carries an N-linked (GlcNAc...) asparagine glycan. The helical transmembrane segment at 885 to 905 threads the bilayer; it reads TVLIPPTSILVLNLVGVVAGF. The Cytoplasmic segment spans residues 906–916; that stretch reads SDALNSGYESW. A helical transmembrane segment spans residues 917–937; it reads GPLFGKVFFAMWVIMHLYPFL. The Extracellular portion of the chain corresponds to 938–946; it reads KGLMGRQNR. The helical transmembrane segment at 947 to 967 threads the bilayer; sequence TPTIVVLWSVLLASVFSLLWV. The Cytoplasmic portion of the chain corresponds to 968 to 989; it reads KIDPFIGSSETTTTNSCANFDC.

The protein belongs to the glycosyltransferase 2 family. Plant cellulose synthase subfamily. Requires Mn(2+) as cofactor. Zn(2+) is required as a cofactor.

It localises to the cell membrane. It catalyses the reaction [(1-&gt;4)-beta-D-glucosyl](n) + UDP-alpha-D-glucose = [(1-&gt;4)-beta-D-glucosyl](n+1) + UDP + H(+). The protein operates within glycan metabolism; plant cellulose biosynthesis. Its function is as follows. Catalytic subunit of cellulose synthase terminal complexes ('rosettes'), required for beta-1,4-glucan microfibril crystallization, a major mechanism of the cell wall formation. Involved in the secondary cell wall formation. The sequence is that of Cellulose synthase A catalytic subunit 4 [UDP-forming] (CESA4) from Oryza sativa subsp. japonica (Rice).